Here is a 279-residue protein sequence, read N- to C-terminus: ATP synthase gamma chain (279 aa).

Belongs to the ATPase gamma chain family. F-type ATPases have 2 components, CF(1) - the catalytic core - and CF(0) - the membrane proton channel. CF(1) has five subunits: alpha(3), beta(3), gamma(1), delta(1), epsilon(1). CF(0) has three main subunits: a, b and c.

The protein resides in the cell membrane. Produces ATP from ADP in the presence of a proton gradient across the membrane. The gamma chain is believed to be important in regulating ATPase activity and the flow of protons through the CF(0) complex. The polypeptide is ATP synthase gamma chain (Mycoplasmopsis pulmonis (strain UAB CTIP) (Mycoplasma pulmonis)).